The chain runs to 740 residues: MKRQFAKIKIAAENLSRSSKSDSKDSELEAIERQVDRYRDTIEKIVRKLPALSGGGGSGSGSSEEQDKRTKKNSHYKIAQALDESAKELPKDMPLQKVLANCGELEKTMAECIIESELETEAKVVRRLKNILDKEIQEISTLKRNVSRTLQEYTSLKRSHEAAIRLEEPAAKVNHIKSQQEECELKLEKERDAWAAQMLELIAKEDEIVSCIRDYVLNQRNYHERALQHVNASLARIQDTIQGTEKSRFGTSLKEHLTSTNREISYIVELCCCCLLEHGLEEEGLLRVGCASTKLRRMKHALEAQHVKTPLPLDYQDPHVIGSILKLYLRELPEPLLTYNLYKDFIRIAERHSEAERKTEIKAILTKLPKENYANLRYLTRFLSIVQQRSALNKMSSQNLAIVMSPNMLWPRIDKSSNAPADYIGQVNSSSAANIIVELLISQWDYFFIGEVEFYLTLQKQKLFVEGKSKSNSSNENLDRNDSEVMESPRYGTLRRQKANAPSPPTTNGNGIIMTTSQTSHRPHAKELFPQQTPEKQEKPAKPPLPNLPQFQSPAASQPTQTQLEPLPPPPVTPAKPVPMTRTQFFGLDNLPSPTADRKSTDSIGSFKLKPDVPQKPLLPKRPTVLGVGVPKADGKSDDEGGTTPTQATIDNGNGSVRFKTEHFLDKLRQENGETNGTREVSSTTKENNHNHDPPATAADQNQQQAQPQVTTPISPNSFQTPKRPTVPAPPPPTNWKSSD.

The 234-residue stretch at 13–246 (ENLSRSSKSD…IQDTIQGTEK (234 aa)) folds into the BAR domain. A disordered region spans residues 49-74 (LPALSGGGGSGSGSSEEQDKRTKKNS). In terms of domain architecture, Rho-GAP spans 251–448 (TSLKEHLTST…LLISQWDYFF (198 aa)). The interval 467–740 (GKSKSNSSNE…PPPTNWKSSD (274 aa)) is disordered. Residues serine 469 and serine 473 each carry the phosphoserine modification. Over residues 506 to 520 (TTNGNGIIMTTSQTS) the composition is skewed to polar residues. Positions 566–577 (PLPPPPVTPAKP) are enriched in pro residues. Residue serine 593 is modified to Phosphoserine. Threonine 595 is subject to Phosphothreonine. Positions 643–655 (TTPTQATIDNGNG) are enriched in polar residues. Basic and acidic residues predominate over residues 659–672 (FKTEHFLDKLRQEN). Over residues 673-686 (GETNGTREVSSTTK) the composition is skewed to polar residues. Residues 694-713 (PPATAADQNQQQAQPQVTTP) show a composition bias toward low complexity. A Phosphoserine modification is found at serine 715. Position 721 is a phosphothreonine (threonine 721). Residues 725–734 (PTVPAPPPPT) show a composition bias toward pro residues. Residues serine 738 and serine 739 each carry the phosphoserine modification.

Its function is as follows. GTPase activator for the Rho-type GTPases by converting them to an inactive GDP-bound state. This Drosophila melanogaster (Fruit fly) protein is Rho GTPase-activating protein 92B (RhoGAP92B).